The chain runs to 1427 residues: MYEAARVTDPIDHTSALAGFLVGAVLGIALIAAVAFATFTCGFGVALLAGMMAGIGAQALLSIGESIGKMFSSQSGNIITGSPDVYVNSLSAAYATLSGVACSKHNPIPLVAQGSTNIFINGRPAARKDDKITCGATIGDGSHDTFFHGGTQTYLPVDDEVPPWLRTATDWAFTLAGLVGGLGGLLKASGGLSRAVLPCAAKFIGGYVLGEAFGRYVAGPAINKAIGGLFGNPIDVTTGRKILLAESETDYVIPSPLPVAIKRFYSSGIDYAGTLGRGWVLPWEIRLHARDGRLWYTDAQGRESGFPMLRAGQAAFSEADQRYLTRTPDGRYILHDLGERYYDFGQYDPESGRIAWVRRVEDQAGQWYQFERDSRGRVTEILTCGGLRAVLDYETVFGRLGTVTLVHEDERRLAVTYGYDENGQLASVTDANGAVVRQFAYTNGLMTSHMNALGFTSSYVWSKIEGEPRVVETHTSEGENWTFEYDVAGRQTRVRHADGRTAHWRFDAQSQIVEYTDLDGAFYRIKYDAVGMPVMLMLPGDRTVMFEYDDAGRIIAETDPLGRTTRTRYDGNSLRPVEVVGPDGGAWRVEYDQQGRVVSNQDSLGRENRYEYPKALTALPSAHFDALGGRKTLEWNSLGKLVGYTDCSGKTTRTSFDAFGRICSRENALGQRITYDVRPTGEPRRVTYPDGSSETFEYDAAGTLVRYIGLGGRVQELLRNARGQLIEAVDPAGRRVQYRYDVEGRLRELQQDHARYTFTYSAGGRLLTETRPDGILRRFEYGEAGELLGLDIVGAPDPHATGNRSVRTIRFERDRMGVLKVQRTPTEVTRYQHDKGDRLVKVERVPTPSGIALGIVPDAVEFEYDKGGRLVAEHGSNGSVIYTLDELDNVVSLGLPHDQTLQMLRYGSGHVHQIRFGDQVVADFERDDLHREVSRTQGRLTQRSGYDPLGRKVWQSAGIDPEMLGRGSGQLWRNYGYDGAGDLIETSDSLRGSTRFSYDPAGRLISRANPLDRKFEEFAWDAAGNLLDDAQRKSRGYVEGNRLLMWQDLRFEYDPFGNLATKRRGANQTQRFTYDGQDRLITVHTQDVRGVVETRFAYDPLGRRIAKTDTAFDLRGMKLRAETKRFVWEGLRLVQEVRETGVSSYVYSPDAPYSPVARADTVMAEALAATVIDSAKRAARIFHFHTDPVGAPQEVTDEAGEVAWAGQYAAWGKVEATNRGVTAARTDQPLRFAGQYADDSTGLHYNTFRFYDPDVGRFINQDPIGLNGGANVYHYAPNPVGWVDPWGLAGSYALGPYQISAPQLPAYNGQTVGTFYYVNDAGGLESKVFSSGGPTPYPNYANAGHVEGQSALFMRDNGISEGLVFHNNPEGTCGFCVNMTETLLPENAKMTVVPPEGAIPVKRGATGETKVFTGNSNSPKSPTKGGC.

Helical transmembrane passes span 16-36 (ALAG…AVAF) and 43-63 (FGVA…LLSI). YD repeat units follow at residues 469 to 501 (RVVE…DGRT), 548 to 584 (YDDA…GPDG), 720 to 747 (NARG…GRLR), and 977 to 1008 (YDGA…ISRA). Positions 1264 to 1427 (IGLNGGANVY…SPKSPTKGGC (164 aa)) are C-terminal effector domain, has cytidine deaminase activity. 3 residues coordinate Zn(2+): H1345, C1373, and C1376. A disordered region spans residues 1402–1427 (KRGATGETKVFTGNSNSPKSPTKGGC). Over residues 1412–1421 (FTGNSNSPKS) the composition is skewed to polar residues.

It belongs to the RHS/WapA nuclease family. In terms of assembly, the toxic domain forms a 1:1 complex with the DddI immunity protein.

It is found in the membrane. It carries out the reaction a 2'-deoxycytidine in double-stranded DNA + H2O + H(+) = a 2'-deoxyuridine in double-stranded DNA + NH4(+). In terms of biological role, toxic component of a toxin-immunity protein module, which functions as a cellular contact-dependent growth inhibition (CDI) system. CDI modules allow bacteria to communicate with and inhibit the growth of closely related neighboring bacteria in a contact-dependent fashion. Bacteria that have this module inhibit or kill bacteria without it, giving them a growth advantage. Probably specifically inhibited by cognate immunity protein DddI. The C-terminal 163 residue fragment has double-stranded DNA cytidine deaminase activity; it does not deaminate ssDNA, ssRNA or dsRNA. Leads to C:G to T:A conversions in deaminated DNA. Preferentially deaminates 5'-TC-3' substrates. In Burkholderia cenocepacia (strain H111), this protein is Double-stranded DNA deaminase toxin A.